A 977-amino-acid chain; its full sequence is Poly [ADP-ribose] polymerase 1 (977 aa).

2 PARP-type zinc fingers span residues Trp-8 to Pro-91 and Cys-104 to Ala-179. Residues Cys-20, Cys-23, His-52, Cys-55, Cys-116, Cys-119, His-141, and Cys-144 each contribute to the Zn(2+) site. 2 disordered regions span residues Lys-177–Ile-199 and Asp-218–Glu-237. In terms of domain architecture, PADR1 zinc-binding spans Asp-227 to Pro-365. In terms of domain architecture, SAP spans Lys-254–Met-288. A zinc ribbon region spans residues Gly-291–Lys-335. Residues Cys-296, Cys-299, Cys-312, and Cys-322 each coordinate Zn(2+). Positions Ser-381–Val-473 constitute a BRCT domain. The 101-residue stretch at Thr-504 to Phe-604 folds into the WGR domain. In terms of domain architecture, PARP alpha-helical spans Lys-626 to Gly-745. In terms of domain architecture, PARP catalytic spans Glu-752–Arg-977.

The protein belongs to the ARTD/PARP family.

It localises to the nucleus. It catalyses the reaction NAD(+) + (ADP-D-ribosyl)n-acceptor = nicotinamide + (ADP-D-ribosyl)n+1-acceptor + H(+).. The enzyme catalyses L-aspartyl-[protein] + NAD(+) = 4-O-(ADP-D-ribosyl)-L-aspartyl-[protein] + nicotinamide. It carries out the reaction L-glutamyl-[protein] + NAD(+) = 5-O-(ADP-D-ribosyl)-L-glutamyl-[protein] + nicotinamide. Functionally, involved in the base excision repair (BER) pathway, by catalyzing the poly(ADP-ribosyl)ation of a limited number of acceptor proteins involved in chromatin architecture and in DNA metabolism. This modification follows DNA damages and appears as an obligatory step in a detection/signaling pathway leading to the reparation of DNA strand breaks. The protein is Poly [ADP-ribose] polymerase 1 (PARP1) of Oryza sativa subsp. japonica (Rice).